We begin with the raw amino-acid sequence, 305 residues long: tRNA pseudouridine synthase B (305 aa).

Aspartate 39 acts as the Nucleophile in catalysis.

It belongs to the pseudouridine synthase TruB family. Type 1 subfamily.

It catalyses the reaction uridine(55) in tRNA = pseudouridine(55) in tRNA. Its function is as follows. Responsible for synthesis of pseudouridine from uracil-55 in the psi GC loop of transfer RNAs. This is tRNA pseudouridine synthase B from Staphylococcus saprophyticus subsp. saprophyticus (strain ATCC 15305 / DSM 20229 / NCIMB 8711 / NCTC 7292 / S-41).